Consider the following 98-residue polypeptide: C-X-C motif chemokine 10 (98 aa).

Positions 1–21 (MNPSAAVIFCLILLGLSGTQG) are cleaved as a signal peptide. Arg26 carries the citrulline modification. Intrachain disulfides connect Cys30–Cys57 and Cys32–Cys74.

It belongs to the intercrine alpha (chemokine CxC) family. Monomer, dimer, and tetramer. Interacts with CXCR3 (via N-terminus). Expressed in the spleen, thymus, lymph nodes and liver. Expressed in astrocytes, microglia, and neurons.

The protein localises to the secreted. Pro-inflammatory cytokine that is involved in a wide variety of processes such as chemotaxis, differentiation, and activation of peripheral immune cells, regulation of cell growth, apoptosis and modulation of angiostatic effects. Plays thereby an important role during viral infections by stimulating the activation and migration of immune cells to the infected sites. Mechanistically, binding of CXCL10 to the CXCR3 receptor activates G protein-mediated signaling and results in downstream activation of phospholipase C-dependent pathway, an increase in intracellular calcium production and actin reorganization. In turn, recruitment of activated Th1 lymphocytes occurs at sites of inflammation. Activation of the CXCL10/CXCR3 axis also plays an important role in neurons in response to brain injury for activating microglia, the resident macrophage population of the central nervous system, and directing them to the lesion site. This recruitment is an essential element for neuronal reorganization. The chain is C-X-C motif chemokine 10 (Cxcl10) from Mus musculus (Mouse).